The sequence spans 440 residues: Trigger factor (440 aa).

A PPIase FKBP-type domain is found at 176 to 261; it reads GDKVVIDYQN…VKSIYVVKDV (86 aa).

Belongs to the FKBP-type PPIase family. Tig subfamily.

It localises to the cytoplasm. The enzyme catalyses [protein]-peptidylproline (omega=180) = [protein]-peptidylproline (omega=0). Involved in protein export. Acts as a chaperone by maintaining the newly synthesized protein in an open conformation. Functions as a peptidyl-prolyl cis-trans isomerase. The chain is Trigger factor from Ehrlichia canis (strain Jake).